The following is a 437-amino-acid chain: Pterin deaminase (437 aa).

H80 and H82 together coordinate a divalent metal cation. Substrate is bound at residue K85. H231 serves as a coordination point for a divalent metal cation. E234 serves as the catalytic Proton donor. Residue D331 participates in a divalent metal cation binding. Position 331–332 (D331–N332) interacts with substrate.

Belongs to the metallo-dependent hydrolases superfamily. Pterin deaminase family. Requires a divalent metal cation as cofactor.

The catalysed reaction is a 2-amino-4-hydroxypteridine + H2O + H(+) = a 2,4-dihydroxypteridine + NH4(+). It catalyses the reaction L-sepiapterin + H2O + H(+) = (S)-xanthopterin-B2 + NH4(+). Catalyzes the deamination of many pterin metabolites, such as formylpterin, pterin-6-carboxylate, pterin-7-carboxylate, pterin, hydroxymethylpterin, biopterin, D-(+)-neopterin, isoxanthopterin, sepiapterin, folate, xanthopterin, and 7,8-dihydrohydroxymethylpterin. May be involved in a degradative pathway for catabolizing pterin rings. In Rhizobium rhizogenes (strain K84 / ATCC BAA-868) (Agrobacterium radiobacter), this protein is Pterin deaminase.